The following is a 469-amino-acid chain: Lactonohydrolase oryH (469 aa).

Residues Met1–Ala20 form the signal peptide.

The protein belongs to the SMP-30/CGR1 family.

It functions in the pathway secondary metabolite biosynthesis. Lactonohydrolase; part of the gene cluster that mediates the biosynthesis of oryzines, natural products with an unusual maleidride backbone. The two subunits of the fungal fatty acid synthase oryfasA and oryfasB probably form octenoic acid. This fatty acid is most likely activated by the acyl-CoA ligase oryP to give octenyl-CoA before the citrate synthase-like protein oryE catalyzes condensation with oxaloacetate to form tricarboxylic acid. The next steps of the pathways are conjectural, but a favorite possible route has been proposed, beginning with decarboxylation and concomitant dehydration by the decarboxylase oryM, followed by tautomerization, which may lead to the production of a diene intermediate. Reduction of this diene intermediate could give the known metabolite piliformic acid. On the pathway to oryzine B and oryzine A, however, hydroxylation of the diene by the alpha-ketoglutarate-dependent dioxygenase oryG and lactonisation by the lactonohydrolases oryH or oryL could give oryzine B directly. Finally, enoyl reduction by the dehydrogenase oryD would then convert oryzine B into oryzine A. This chain is Lactonohydrolase oryH, found in Aspergillus oryzae (strain ATCC 42149 / RIB 40) (Yellow koji mold).